The following is a 125-amino-acid chain: Large ribosomal subunit protein bL12 (125 aa).

It belongs to the bacterial ribosomal protein bL12 family. Homodimer. Part of the ribosomal stalk of the 50S ribosomal subunit. Forms a multimeric L10(L12)X complex, where L10 forms an elongated spine to which 2 to 4 L12 dimers bind in a sequential fashion. Binds GTP-bound translation factors.

Forms part of the ribosomal stalk which helps the ribosome interact with GTP-bound translation factors. Is thus essential for accurate translation. The protein is Large ribosomal subunit protein bL12 of Cereibacter sphaeroides (strain ATCC 17023 / DSM 158 / JCM 6121 / CCUG 31486 / LMG 2827 / NBRC 12203 / NCIMB 8253 / ATH 2.4.1.) (Rhodobacter sphaeroides).